Here is a 322-residue protein sequence, read N- to C-terminus: MPLNKSNIREYKLVVVGGGGVGKSALTIQLTQSHFVDEYDPTIEDSYRKQVVIDDEVSILDILDTAGQEEYSAMREQYMRNGEGFLLVYSITSKSSLDELMTYYQQILRVKDTDYVPIVVVGNKSDLENEKQVSYQDGLNMAKQMNAPFLETSAKQAINVEEAFYTLARLVRDEGGKYNKTLTENDNSKQTSQDTKGSGANSVPRNSGGHRKMSNAANGKNVNSSTTVVNARNASIESKTGLAGNQATNGKTQTDRTNIDNSTGQAGQANAQSANTVNNRVNNNSKAGQVSNAKQARKQQAAPGGNTSEASKSGSGGCCIIS.

GTP is bound by residues 20 to 25, 36 to 42, 66 to 67, and 123 to 126; these read GVGKSA, VDEYDPT, AG, and NKSD. An Effector region motif is present at residues 39–47; sequence YDPTIEDSY. K131 participates in a covalent cross-link: Glycyl lysine isopeptide (Lys-Gly) (interchain with G-Cter in ubiquitin). 153 to 155 provides a ligand contact to GTP; sequence SAK. Residues 178–322 form a disordered region; it reads YNKTLTENDN…SGSGGCCIIS (145 aa). The segment covering 180–205 has biased composition (polar residues); that stretch reads KTLTENDNSKQTSQDTKGSGANSVPR. Phosphoserine is present on residues S198, S202, S207, S214, S235, and S238. Residues 215–252 show a composition bias toward polar residues; it reads NAANGKNVNSSTTVVNARNASIESKTGLAGNQATNGKT. Over residues 261 to 284 the composition is skewed to low complexity; that stretch reads NSTGQAGQANAQSANTVNNRVNNN. Residues 285–294 show a composition bias toward polar residues; it reads SKAGQVSNAK. Residue C318 is the site of S-palmitoyl cysteine attachment. Position 319 is a cysteine methyl ester (C319). Residue C319 is the site of S-farnesyl cysteine attachment. Positions 320 to 322 are cleaved as a propeptide — removed in mature form; it reads IIS.

It belongs to the small GTPase superfamily. Ras family. Farnesylated by RAM1-RAM2, which is required for targeting RAS2 to the cytoplasmic site of the endoplasmic reticulum, where proteolytic processing of the C-terminus by RCE1 and methylation of the resulting carboxyl group by STE14 occurs. In terms of processing, palmitoylated by the ERF2-SHR5 complex, which is required for proper plasma membrane localization of RAS2.

It localises to the cell membrane. The enzyme catalyses GTP + H2O = GDP + phosphate + H(+). Alternates between an inactive form bound to GDP and an active form bound to GTP. Activated by guanine nucleotide-exchange factor (GEF) CDC25 and inactivated by GTPase-activating proteins (GAPs) IRA1 and IRA2. The S.cerevisiae Ras proteins modulate the activity of the adenylate cyclase catalytic subunit and therefore affect the biosynthesis of cyclic-AMP. This is Ras-like protein 2 (RAS2) from Saccharomyces cerevisiae (strain ATCC 204508 / S288c) (Baker's yeast).